The primary structure comprises 298 residues: Ribosomal RNA small subunit methyltransferase A (298 aa).

Residues Asn30, Val32, Gly57, Glu78, Asp108, and Asn126 each contribute to the S-adenosyl-L-methionine site.

It belongs to the class I-like SAM-binding methyltransferase superfamily. rRNA adenine N(6)-methyltransferase family. RsmA subfamily.

It localises to the cytoplasm. The catalysed reaction is adenosine(1518)/adenosine(1519) in 16S rRNA + 4 S-adenosyl-L-methionine = N(6)-dimethyladenosine(1518)/N(6)-dimethyladenosine(1519) in 16S rRNA + 4 S-adenosyl-L-homocysteine + 4 H(+). In terms of biological role, specifically dimethylates two adjacent adenosines (A1518 and A1519) in the loop of a conserved hairpin near the 3'-end of 16S rRNA in the 30S particle. May play a critical role in biogenesis of 30S subunits. This is Ribosomal RNA small subunit methyltransferase A from Cutibacterium acnes (strain DSM 16379 / KPA171202) (Propionibacterium acnes).